Consider the following 348-residue polypeptide: UDP-N-acetylglucosamine--N-acetylmuramyl-(pentapeptide) pyrophosphoryl-undecaprenol N-acetylglucosamine transferase (348 aa).

Residues 11–13 (TGG), N120, R161, S187, and Q281 contribute to the UDP-N-acetyl-alpha-D-glucosamine site.

The protein belongs to the glycosyltransferase 28 family. MurG subfamily.

Its subcellular location is the cell inner membrane. The enzyme catalyses di-trans,octa-cis-undecaprenyl diphospho-N-acetyl-alpha-D-muramoyl-L-alanyl-D-glutamyl-meso-2,6-diaminopimeloyl-D-alanyl-D-alanine + UDP-N-acetyl-alpha-D-glucosamine = di-trans,octa-cis-undecaprenyl diphospho-[N-acetyl-alpha-D-glucosaminyl-(1-&gt;4)]-N-acetyl-alpha-D-muramoyl-L-alanyl-D-glutamyl-meso-2,6-diaminopimeloyl-D-alanyl-D-alanine + UDP + H(+). The protein operates within cell wall biogenesis; peptidoglycan biosynthesis. Its function is as follows. Cell wall formation. Catalyzes the transfer of a GlcNAc subunit on undecaprenyl-pyrophosphoryl-MurNAc-pentapeptide (lipid intermediate I) to form undecaprenyl-pyrophosphoryl-MurNAc-(pentapeptide)GlcNAc (lipid intermediate II). This is UDP-N-acetylglucosamine--N-acetylmuramyl-(pentapeptide) pyrophosphoryl-undecaprenol N-acetylglucosamine transferase from Crocosphaera subtropica (strain ATCC 51142 / BH68) (Cyanothece sp. (strain ATCC 51142)).